We begin with the raw amino-acid sequence, 492 residues long: uncharacterized protein (492 aa).

266–273 provides a ligand contact to ATP; the sequence is GIQGTGKS.

Belongs to the AAA ATPase family. Highly divergent.

The protein resides in the plastid. Its subcellular location is the chloroplast. This is an uncharacterized protein from Pyropia yezoensis (Susabi-nori).